The chain runs to 122 residues: Double-headed protease inhibitor, submandibular gland (122 aa).

Kazal-like domains follow at residues 10–70 (GGRK…ECDI) and 71–121 (ECTQ…QCQS). 6 disulfide bridges follow: C16-C50, C28-C47, C36-C68, C72-C101, C79-C98, and C87-C119.

The protein resides in the secreted. In terms of biological role, this inhibitor is composed of two homologous actively inhibiting halves: one which inhibits trypsin, the other which inhibits elastase. The chain is Double-headed protease inhibitor, submandibular gland from Panthera uncia (Snow leopard).